Reading from the N-terminus, the 707-residue chain is Alpha-hemolysin translocation ATP-binding protein HlyB (707 aa).

Positions 3-125 (SCHKIDYGLY…ALYQGHIILI (123 aa)) constitute a Peptidase C39 domain. His83 is an active-site residue. The ABC transmembrane type-1 domain occupies 154–436 (FIETLVVSVF…LAQIWQDFQQ (283 aa)). 5 consecutive transmembrane segments (helical) span residues 158–178 (LVVSVFLQLFALITPLFFQVV), 191–211 (LNVITVALSVVVVFEIILSGL), 269–289 (ALTSVLDLLFSLIFFAVMWYY), 295–315 (LVILFSLPCYAAWSVFISPIL), and 388–408 (VMIINLWLGAHLVISGDLSIG). One can recognise an ABC transporter domain in the interval 468 to 703 (ITFRNIRFRY…PESLYSYLYQ (236 aa)). 502–509 (GRSGSGKS) provides a ligand contact to ATP.

This sequence belongs to the ABC transporter superfamily. Protein-1 exporter (TC 3.A.1.109) family. Homodimer.

It localises to the cell inner membrane. Part of the ABC transporter complex HlyBD involved in hemolysin export. Transmembrane domains (TMD) form a pore in the inner membrane and the ATP-binding domain (NBD) is responsible for energy generation. In Escherichia coli, this protein is Alpha-hemolysin translocation ATP-binding protein HlyB (hlyB).